The primary structure comprises 172 residues: Adenine phosphoribosyltransferase (172 aa).

This sequence belongs to the purine/pyrimidine phosphoribosyltransferase family. As to quaternary structure, homodimer.

It is found in the cytoplasm. The catalysed reaction is AMP + diphosphate = 5-phospho-alpha-D-ribose 1-diphosphate + adenine. The protein operates within purine metabolism; AMP biosynthesis via salvage pathway; AMP from adenine: step 1/1. In terms of biological role, catalyzes a salvage reaction resulting in the formation of AMP, that is energically less costly than de novo synthesis. This chain is Adenine phosphoribosyltransferase, found in Prochlorococcus marinus (strain MIT 9313).